We begin with the raw amino-acid sequence, 200 residues long: Holliday junction resolvase RecU (200 aa).

The Mg(2+) site is built by Thr85, Asp87, Glu100, and Gln119.

It belongs to the RecU family. It depends on Mg(2+) as a cofactor.

The protein resides in the cytoplasm. It catalyses the reaction Endonucleolytic cleavage at a junction such as a reciprocal single-stranded crossover between two homologous DNA duplexes (Holliday junction).. Endonuclease that resolves Holliday junction intermediates in genetic recombination. Cleaves mobile four-strand junctions by introducing symmetrical nicks in paired strands. Promotes annealing of linear ssDNA with homologous dsDNA. Required for DNA repair, homologous recombination and chromosome segregation. The polypeptide is Holliday junction resolvase RecU (Bacillus cytotoxicus (strain DSM 22905 / CIP 110041 / 391-98 / NVH 391-98)).